The sequence spans 476 residues: Serine carboxypeptidase 2 (476 aa).

Residues 1–34 (MRTTTRRLPPAPAAAAVLLAALTCLLLRPAAVAA) form the signal peptide. Intrachain disulfides connect cysteine 97–cysteine 353, cysteine 254–cysteine 266, and cysteine 290–cysteine 320. N-linked (GlcNAc...) asparagine glycans are attached at residues asparagine 148 and asparagine 159. Serine 190 is an active-site residue. Residue asparagine 291 is glycosylated (N-linked (GlcNAc...) asparagine). A propeptide spans 295 to 313 (SSSSSSLSRRRTRGRYPWL) (linker peptide). Threonine 314 carries the blocked amino end (Thr) modification. 2 N-linked (GlcNAc...) asparagine glycosylation sites follow: asparagine 341 and asparagine 347. An N-linked (GlcNAc...) asparagine; partial glycan is attached at asparagine 352. A glycan (O-linked (GalNAc...) threonine; in variant 351-AT-352) is linked at asparagine 352. Catalysis depends on residues aspartate 390 and histidine 443. N-linked (GlcNAc...) asparagine glycosylation is present at asparagine 472.

It belongs to the peptidase S10 family. Carboxypeptidase II is a dimer, where each monomer is composed of two chains linked by a disulfide bond.

Its subcellular location is the secreted. The enzyme catalyses Preferential release of a C-terminal arginine or lysine residue.. May be involved in the degradation of small peptides (2-5 residues) or in the degradation of storage proteins in the embryo. The chain is Serine carboxypeptidase 2 (CBP2) from Hordeum vulgare (Barley).